Reading from the N-terminus, the 356-residue chain is S-adenosylmethionine:tRNA ribosyltransferase-isomerase (356 aa).

It belongs to the QueA family. As to quaternary structure, monomer.

It localises to the cytoplasm. The catalysed reaction is 7-aminomethyl-7-carbaguanosine(34) in tRNA + S-adenosyl-L-methionine = epoxyqueuosine(34) in tRNA + adenine + L-methionine + 2 H(+). The protein operates within tRNA modification; tRNA-queuosine biosynthesis. Functionally, transfers and isomerizes the ribose moiety from AdoMet to the 7-aminomethyl group of 7-deazaguanine (preQ1-tRNA) to give epoxyqueuosine (oQ-tRNA). The polypeptide is S-adenosylmethionine:tRNA ribosyltransferase-isomerase (Nitrosospira multiformis (strain ATCC 25196 / NCIMB 11849 / C 71)).